Here is a 500-residue protein sequence, read N- to C-terminus: MSNMQQKTDVILIGAGIMSATLGSLLKELAPEWEIKVFEKLASAGEESSNEWNNAGTGHSALCELNYTSEKSDGSIDISKAVKVNEQFQLSRQFWAYLVKSKLIRNPQDFIMPLPHMSLVQGEKNVEFLKNRFEALSKNPLFQGMEFSDAPETLKKWLPLIMEGRTSNEPMAATKIDSGTDVNFGALTRMLFNYLKTKDVELNYKHSVENIKRTKNGLWEVKVHDMNSGKIEHHTAKFVFIGGGGGSLPLLQKTGIPESKHIGGFPVSGLFMVCKNQKVVEQHHAKVYGKAKVGAPPMSVPHLDTRYIDNKKALLFGPFAGFSPKFLKTGSNLDLIGSVKPNNVLTMLAAGVKEMGLTKYLIQQVMLSHEKRMEELREFIPNAKSEDWDIVVAGQRVQVIKDTDAGGKGTLQFGTEVVSAADGSIAALLGASPGASTAVHVMLEVLEKCFPSRMVEWEGKIKEMIPSYGISLTENPRLFQDLHTSTGRTLGLNEKETVHN.

Belongs to the MQO family. It depends on FAD as a cofactor.

The enzyme catalyses (S)-malate + a quinone = a quinol + oxaloacetate. Its pathway is carbohydrate metabolism; tricarboxylic acid cycle; oxaloacetate from (S)-malate (quinone route): step 1/1. This Bacillus cereus (strain ZK / E33L) protein is Probable malate:quinone oxidoreductase.